The following is a 501-amino-acid chain: Armadillo repeat-containing protein 6 (501 aa).

Serine 64 carries the post-translational modification Phosphoserine. 4 ARM repeats span residues 220–264 (GVLP…HAHN), 274–318 (KGLK…DLGG), 319–369 (LSIL…RAGG), and 370–412 (TESI…VEGG). A Pros-methylhistidine modification is found at histidine 263.

This sequence belongs to the ARMC6 family. In terms of processing, methylated at His-263 by METTL9.

In Homo sapiens (Human), this protein is Armadillo repeat-containing protein 6 (ARMC6).